A 69-amino-acid polypeptide reads, in one-letter code: Neurotoxin Cex7 (69 aa).

A signal peptide is located at residue Ala1. One can recognise an LCN-type CS-alpha/beta domain in the interval 2–67 (REGYLVSKST…TYPIPGKSCG (66 aa)). Intrachain disulfides connect Cys13–Cys66, Cys17–Cys42, Cys26–Cys47, and Cys30–Cys49. Cys66 is subject to Cysteine amide. A propeptide spanning residues 67 to 69 (GKK) is cleaved from the precursor.

This sequence belongs to the long (4 C-C) scorpion toxin superfamily. Sodium channel inhibitor family. Beta subfamily. In terms of tissue distribution, expressed by the venom gland.

The protein localises to the secreted. Its function is as follows. Beta toxins bind voltage-independently at site-4 of sodium channels (Nav) and shift the voltage of activation toward more negative potentials thereby affecting sodium channel activation and promoting spontaneous and repetitive firing. The sequence is that of Neurotoxin Cex7 from Centruroides exilicauda (Bark scorpion).